The sequence spans 903 residues: Translation initiation factor IF-2 (903 aa).

A disordered region spans residues 49-314 (LNREHGSGPD…GSSLQQGFNK (266 aa)). Residues 68–82 (STLNIQGTGGKSKSV) show a composition bias toward polar residues. 2 stretches are compositionally biased toward basic and acidic residues: residues 93–163 (VKRD…EAAE) and 174–225 (EVSK…ENAT). The span at 265 to 279 (GRARPAKVARQKKSN) shows a compositional bias: basic residues. Basic and acidic residues predominate over residues 280-293 (KHSESKADREEARA). One can recognise a tr-type G domain in the interval 402 to 571 (PRAPVVTIMG…LLQSEVLELK (170 aa)). Positions 411-418 (GHVDHGKT) are G1. 411 to 418 (GHVDHGKT) contributes to the GTP binding site. A G2 region spans residues 436 to 440 (GITQH). A G3 region spans residues 457–460 (DTPG). GTP contacts are provided by residues 457 to 461 (DTPGH) and 511 to 514 (NKID). The segment at 511-514 (NKID) is G4. Residues 547 to 549 (SAK) form a G5 region.

The protein belongs to the TRAFAC class translation factor GTPase superfamily. Classic translation factor GTPase family. IF-2 subfamily.

The protein resides in the cytoplasm. Functionally, one of the essential components for the initiation of protein synthesis. Protects formylmethionyl-tRNA from spontaneous hydrolysis and promotes its binding to the 30S ribosomal subunits. Also involved in the hydrolysis of GTP during the formation of the 70S ribosomal complex. In Cronobacter sakazakii (strain ATCC BAA-894) (Enterobacter sakazakii), this protein is Translation initiation factor IF-2.